We begin with the raw amino-acid sequence, 303 residues long: Putative S-adenosyl-L-methionine-dependent methyltransferase MSMEG_1479/MSMEI_1443 (303 aa).

S-adenosyl-L-methionine is bound by residues Asp-130 and 159 to 160 (DL).

The protein belongs to the UPF0677 family.

Its function is as follows. Exhibits S-adenosyl-L-methionine-dependent methyltransferase activity. This chain is Putative S-adenosyl-L-methionine-dependent methyltransferase MSMEG_1479/MSMEI_1443, found in Mycolicibacterium smegmatis (strain ATCC 700084 / mc(2)155) (Mycobacterium smegmatis).